Here is a 315-residue protein sequence, read N- to C-terminus: Nucleotide-binding protein CGSHiEE_06315 (315 aa).

8–15 (GRSGAGKS) lines the ATP pocket. Residue 56-59 (DIRN) coordinates GTP.

This sequence belongs to the RapZ-like family.

In terms of biological role, displays ATPase and GTPase activities. The protein is Nucleotide-binding protein CGSHiEE_06315 of Haemophilus influenzae (strain PittEE).